A 586-amino-acid polypeptide reads, in one-letter code: BTB/POZ domain and ankyrin repeat-containing protein NPR1 (586 aa).

One can recognise a BTB domain in the interval 63-139 (SDADIVVEGI…VYTGKLKPSP (77 aa)). A C2HC NPR-type zinc finger spans residues 142–156 (VSTCVHNVCAHDACR). Residues Cys-145, Cys-150, His-152, and Cys-155 each contribute to the Zn(2+) site. ANK repeat units follow at residues 266–296 (KRIR…TLDE), 298–325 (NALH…DVNL), and 329–358 (RGYT…RASE). The salicylic acid-binding core (SBC) stretch occupies residues 388 to 522 (EANKDRICID…LDKFIDDDLP (135 aa)). A salicylate-binding site is contributed by Arg-433. Positions 561–586 (NLSGLSSSSSTTSPEKIGANQKVREP) are disordered. A compositionally biased stretch (low complexity) spans 562-573 (LSGLSSSSSTTS).

It belongs to the plant 'ANKYRIN-BTB/POZ' family. 'NPR1-like' subfamily. Highly expressed in leaves. Expressed at low levels in roots and stems.

The protein resides in the cytoplasm. It localises to the nucleus. Its subcellular location is the nuclear body. It participates in protein modification; protein ubiquitination. Its function is as follows. Salicylic acid (SA)-binding substrate-specific adapter of an E3 ubiquitin-protein ligase complex (CUL3-RBX1-BTB) which mediates the ubiquitination and subsequent proteasomal degradation of target proteins. Transcription cofactor that represses gene expression in the absence of salicylic acid (SA), when attached to negative cis-elements (W-box) with WRKY transcription factors, but stimulates gene expression upon activation by SA, when sumoylated and attached to positive cis-elements (as-1) with TGA transcription factors, thus confering immunity through a series of gene regulations ending in a significant increase in antimicrobial and defense genes expression. Probable component of the salicylic acid (SA) defense signaling pathway and pathogen-induced systemic acquired resistance (SAR). May be involved in disease resistance against fungal pathogens. May be involved in tolerance to salt and osmotic stresses. This Malus hupehensis (Chinese crab apple) protein is BTB/POZ domain and ankyrin repeat-containing protein NPR1.